Here is a 143-residue protein sequence, read N- to C-terminus: Peptide methionine sulfoxide reductase MsrB (143 aa).

One can recognise a MsrB domain in the interval 16–139 (DAELRRRLTP…NSAALNFESR (124 aa)). 4 residues coordinate Zn(2+): cysteine 55, cysteine 58, cysteine 104, and cysteine 107. The active-site Nucleophile is the cysteine 128.

The protein belongs to the MsrB Met sulfoxide reductase family. Requires Zn(2+) as cofactor.

The catalysed reaction is L-methionyl-[protein] + [thioredoxin]-disulfide + H2O = L-methionyl-(R)-S-oxide-[protein] + [thioredoxin]-dithiol. The protein is Peptide methionine sulfoxide reductase MsrB of Burkholderia cenocepacia (strain ATCC BAA-245 / DSM 16553 / LMG 16656 / NCTC 13227 / J2315 / CF5610) (Burkholderia cepacia (strain J2315)).